Here is a 410-residue protein sequence, read N- to C-terminus: 3-phosphoshikimate 1-carboxyvinyltransferase (410 aa).

3 residues coordinate 3-phosphoshikimate: K27, S28, and R32. Phosphoenolpyruvate is bound at residue K27. The phosphoenolpyruvate site is built by G91 and R119. 3-phosphoshikimate contacts are provided by S161, S162, Q163, D297, Q319, and K323. Q163 contributes to the phosphoenolpyruvate binding site. D297 functions as the Proton acceptor in the catalytic mechanism. Positions 327, 368, and 394 each coordinate phosphoenolpyruvate.

It belongs to the EPSP synthase family. In terms of assembly, monomer.

It is found in the cytoplasm. The enzyme catalyses 3-phosphoshikimate + phosphoenolpyruvate = 5-O-(1-carboxyvinyl)-3-phosphoshikimate + phosphate. It participates in metabolic intermediate biosynthesis; chorismate biosynthesis. In terms of biological role, catalyzes the transfer of the enolpyruvyl moiety of phosphoenolpyruvate (PEP) to the 5-hydroxyl of shikimate-3-phosphate (S3P) to produce enolpyruvyl shikimate-3-phosphate and inorganic phosphate. The sequence is that of 3-phosphoshikimate 1-carboxyvinyltransferase from Pyrococcus abyssi (strain GE5 / Orsay).